A 74-amino-acid chain; its full sequence is Exodeoxyribonuclease 7 small subunit (74 aa).

It belongs to the XseB family. In terms of assembly, heterooligomer composed of large and small subunits.

The protein resides in the cytoplasm. The catalysed reaction is Exonucleolytic cleavage in either 5'- to 3'- or 3'- to 5'-direction to yield nucleoside 5'-phosphates.. Its function is as follows. Bidirectionally degrades single-stranded DNA into large acid-insoluble oligonucleotides, which are then degraded further into small acid-soluble oligonucleotides. The sequence is that of Exodeoxyribonuclease 7 small subunit from Leuconostoc citreum (strain KM20).